The sequence spans 211 residues: Large ribosomal subunit protein bL9 (211 aa).

The segment at 183 to 211 (AAASEDEELAETAGVAPAEPSEEDDSAKA) is disordered. The span at 202–211 (PSEEDDSAKA) shows a compositional bias: acidic residues.

This sequence belongs to the bacterial ribosomal protein bL9 family.

In terms of biological role, binds to the 23S rRNA. The polypeptide is Large ribosomal subunit protein bL9 (Roseobacter denitrificans (strain ATCC 33942 / OCh 114) (Erythrobacter sp. (strain OCh 114))).